A 142-amino-acid polypeptide reads, in one-letter code: uncharacterized protein (142 aa).

Residues 75–91 form a helical membrane-spanning segment; the sequence is YAAILAQVSFAFLCTGF.

Its subcellular location is the membrane. This is an uncharacterized protein from Haemophilus influenzae (strain ATCC 51907 / DSM 11121 / KW20 / Rd).